Here is a 462-residue protein sequence, read N- to C-terminus: Glycine--tRNA ligase (462 aa).

Residues Arg-98 and Glu-174 each contribute to the substrate site. Residues 206-208, 216-221, 290-291, and 334-337 each bind ATP; these read RNE, FRTREF, EL, and GADR. Residue 221–225 participates in substrate binding; it reads FEQME. Position 330–334 (330–334) interacts with substrate; the sequence is EPSLG.

This sequence belongs to the class-II aminoacyl-tRNA synthetase family. In terms of assembly, homodimer.

Its subcellular location is the cytoplasm. It catalyses the reaction tRNA(Gly) + glycine + ATP = glycyl-tRNA(Gly) + AMP + diphosphate. Its function is as follows. Catalyzes the attachment of glycine to tRNA(Gly). In Lachnoclostridium phytofermentans (strain ATCC 700394 / DSM 18823 / ISDg) (Clostridium phytofermentans), this protein is Glycine--tRNA ligase.